A 256-amino-acid chain; its full sequence is Triosephosphate isomerase (256 aa).

9 to 11 lines the substrate pocket; it reads NWK. Residue His97 is the Electrophile of the active site. Residue Glu169 is the Proton acceptor of the active site. Residues Gly175, Ser214, and 235–236 each bind substrate; that span reads GG.

The protein belongs to the triosephosphate isomerase family. As to quaternary structure, homodimer.

Its subcellular location is the cytoplasm. The catalysed reaction is D-glyceraldehyde 3-phosphate = dihydroxyacetone phosphate. The protein operates within carbohydrate biosynthesis; gluconeogenesis. It functions in the pathway carbohydrate degradation; glycolysis; D-glyceraldehyde 3-phosphate from glycerone phosphate: step 1/1. In terms of biological role, involved in the gluconeogenesis. Catalyzes stereospecifically the conversion of dihydroxyacetone phosphate (DHAP) to D-glyceraldehyde-3-phosphate (G3P). The polypeptide is Triosephosphate isomerase (Vibrio parahaemolyticus serotype O3:K6 (strain RIMD 2210633)).